The sequence spans 176 residues: Cytochrome b (176 aa).

The next 3 membrane-spanning stretches (helical) occupy residues 33–53 (FGSL…FLAM), 77–98 (WLLR…YLHV), and 113–133 (WNVG…GYVL). 2 residues coordinate heme b: His83 and His97.

This sequence belongs to the cytochrome b family. As to quaternary structure, the cytochrome bc1 complex contains 11 subunits: 3 respiratory subunits (MT-CYB, CYC1 and UQCRFS1), 2 core proteins (UQCRC1 and UQCRC2) and 6 low-molecular weight proteins (UQCRH/QCR6, UQCRB/QCR7, UQCRQ/QCR8, UQCR10/QCR9, UQCR11/QCR10 and a cleavage product of UQCRFS1). This cytochrome bc1 complex then forms a dimer. Heme b serves as cofactor.

The protein localises to the mitochondrion inner membrane. Component of the ubiquinol-cytochrome c reductase complex (complex III or cytochrome b-c1 complex) that is part of the mitochondrial respiratory chain. The b-c1 complex mediates electron transfer from ubiquinol to cytochrome c. Contributes to the generation of a proton gradient across the mitochondrial membrane that is then used for ATP synthesis. In Mormopterus kalinowskii (Kalinowski's mastiff bat), this protein is Cytochrome b (MT-CYB).